Reading from the N-terminus, the 601-residue chain is Proline--tRNA ligase (601 aa).

This sequence belongs to the class-II aminoacyl-tRNA synthetase family. ProS type 1 subfamily. In terms of assembly, homodimer.

It is found in the cytoplasm. It catalyses the reaction tRNA(Pro) + L-proline + ATP = L-prolyl-tRNA(Pro) + AMP + diphosphate. Its function is as follows. Catalyzes the attachment of proline to tRNA(Pro) in a two-step reaction: proline is first activated by ATP to form Pro-AMP and then transferred to the acceptor end of tRNA(Pro). As ProRS can inadvertently accommodate and process non-cognate amino acids such as alanine and cysteine, to avoid such errors it has two additional distinct editing activities against alanine. One activity is designated as 'pretransfer' editing and involves the tRNA(Pro)-independent hydrolysis of activated Ala-AMP. The other activity is designated 'posttransfer' editing and involves deacylation of mischarged Ala-tRNA(Pro). The misacylated Cys-tRNA(Pro) is not edited by ProRS. The sequence is that of Proline--tRNA ligase from Tropheryma whipplei (strain TW08/27) (Whipple's bacillus).